A 141-amino-acid chain; its full sequence is Lutropin subunit beta (141 aa).

An N-terminal signal peptide occupies residues 1-20; sequence MEMFQGLLLWLLLGVAGVWA. 6 cysteine pairs are disulfide-bonded: Cys29–Cys77, Cys43–Cys92, Cys46–Cys130, Cys54–Cys108, Cys58–Cys110, and Cys113–Cys120. N-linked (GlcNAc...) asparagine glycosylation occurs at Asn33.

This sequence belongs to the glycoprotein hormones subunit beta family. As to quaternary structure, heterodimer of a common alpha chain and a unique beta chain which confers biological specificity to thyrotropin, lutropin, follitropin and gonadotropin.

It localises to the secreted. Functionally, promotes spermatogenesis and ovulation by stimulating the testes and ovaries to synthesize steroids. In Bos taurus (Bovine), this protein is Lutropin subunit beta (LHB).